We begin with the raw amino-acid sequence, 216 residues long: UPF0502 protein Pfl01_3711 (216 aa).

It belongs to the UPF0502 family.

The protein is UPF0502 protein Pfl01_3711 of Pseudomonas fluorescens (strain Pf0-1).